The primary structure comprises 476 residues: MAEYEVVIGLEVHAQLRTSSKLFCACSTEFGSEPNTNVCEICSGMPGVLPVVNRKAVEYAVMMGMAVDCTINNDSVFARKNYFYPDLPYGYQISQFERPLCEHGHLDIPVNGGTKRIGITRIHMENDAGKNIHSAADNASYVDLNRAGTPLIEIVSEPDMRSAEEAVAYLKELRSILLYLGICDGNMEEGSFRCDANVSLRPAGQKEFGTRTELKNVNSFRNVQRAIEVEIARQQDLLEDGEKVVQETRLYDAARNVTASMRGKEEAHDYRYFPDPDLIPLHLEDGWLQEWRKALPELPALRRTRFMEQYGLSVQDAELLTAERELADFYEAAVRHGGVPKKVANLMMGEFMRELNERRISVNEAAMTPEAVAELVRLQEEGVVSSKIVHDIFSDLFTSGSMPEAYVKAKGLVQISDSGAIETAVDEVLAENPAEVEAYRGGKTKLMSFFMGQVMRKTRGKANPAVVTGLLTEKLG.

It belongs to the GatB/GatE family. GatB subfamily. In terms of assembly, heterotrimer of A, B and C subunits.

The catalysed reaction is L-glutamyl-tRNA(Gln) + L-glutamine + ATP + H2O = L-glutaminyl-tRNA(Gln) + L-glutamate + ADP + phosphate + H(+). It carries out the reaction L-aspartyl-tRNA(Asn) + L-glutamine + ATP + H2O = L-asparaginyl-tRNA(Asn) + L-glutamate + ADP + phosphate + 2 H(+). Functionally, allows the formation of correctly charged Asn-tRNA(Asn) or Gln-tRNA(Gln) through the transamidation of misacylated Asp-tRNA(Asn) or Glu-tRNA(Gln) in organisms which lack either or both of asparaginyl-tRNA or glutaminyl-tRNA synthetases. The reaction takes place in the presence of glutamine and ATP through an activated phospho-Asp-tRNA(Asn) or phospho-Glu-tRNA(Gln). The polypeptide is Aspartyl/glutamyl-tRNA(Asn/Gln) amidotransferase subunit B (Oleidesulfovibrio alaskensis (strain ATCC BAA-1058 / DSM 17464 / G20) (Desulfovibrio alaskensis)).